The following is a 376-amino-acid chain: Succinyl-diaminopimelate desuccinylase (376 aa).

His67 is a Zn(2+) binding site. The active site involves Asp69. Asp100 lines the Zn(2+) pocket. Residue Glu134 is the Proton acceptor of the active site. Residues Glu135, Glu163, and His349 each coordinate Zn(2+).

This sequence belongs to the peptidase M20A family. DapE subfamily. Homodimer. It depends on Zn(2+) as a cofactor. Co(2+) is required as a cofactor.

It catalyses the reaction N-succinyl-(2S,6S)-2,6-diaminopimelate + H2O = (2S,6S)-2,6-diaminopimelate + succinate. Its pathway is amino-acid biosynthesis; L-lysine biosynthesis via DAP pathway; LL-2,6-diaminopimelate from (S)-tetrahydrodipicolinate (succinylase route): step 3/3. Catalyzes the hydrolysis of N-succinyl-L,L-diaminopimelic acid (SDAP), forming succinate and LL-2,6-diaminopimelate (DAP), an intermediate involved in the bacterial biosynthesis of lysine and meso-diaminopimelic acid, an essential component of bacterial cell walls. In Shewanella denitrificans (strain OS217 / ATCC BAA-1090 / DSM 15013), this protein is Succinyl-diaminopimelate desuccinylase.